Consider the following 454-residue polypeptide: Glutamyl-tRNA(Gln) amidotransferase subunit A (454 aa).

Residues lysine 77 and serine 152 each act as charge relay system in the active site. Serine 176 (acyl-ester intermediate) is an active-site residue.

This sequence belongs to the amidase family. GatA subfamily. Heterotrimer of A, B and C subunits.

The enzyme catalyses L-glutamyl-tRNA(Gln) + L-glutamine + ATP + H2O = L-glutaminyl-tRNA(Gln) + L-glutamate + ADP + phosphate + H(+). Functionally, allows the formation of correctly charged Gln-tRNA(Gln) through the transamidation of misacylated Glu-tRNA(Gln) in organisms which lack glutaminyl-tRNA synthetase. The reaction takes place in the presence of glutamine and ATP through an activated gamma-phospho-Glu-tRNA(Gln). In Methanothermobacter thermautotrophicus (strain ATCC 29096 / DSM 1053 / JCM 10044 / NBRC 100330 / Delta H) (Methanobacterium thermoautotrophicum), this protein is Glutamyl-tRNA(Gln) amidotransferase subunit A (gatA).